The chain runs to 196 residues: Charged multivesicular body protein 1a (196 aa).

Positions 5–41 (LFQLKFTAKQLEKLAKKAEKDSNTEQAKVKKALQQKN) form a coiled coil. Residues 170–181 (QGASSVGESSTR) are compositionally biased toward polar residues. The tract at residues 170-196 (QGASSVGESSTRTQEDQLSRRLASLRN) is disordered. The short motif at 185–195 (DQLSRRLASLR) is the MIT-interacting motif element.

This sequence belongs to the SNF7 family. Probable peripherally associated component of the endosomal sorting required for transport complex III (ESCRT-III).

The protein localises to the cytoplasm. It localises to the endosome membrane. Probable peripherally associated component of the endosomal sorting required for transport complex III (ESCRT-III) which is involved in multivesicular bodies (MVBs) formation and sorting of endosomal cargo proteins into MVBs. MVBs contain intraluminal vesicles (ILVs) that are generated by invagination and scission from the limiting membrane of the endosome and mostly are delivered to lysosomes enabling degradation of membrane proteins, such as stimulated growth factor receptors, lysosomal enzymes and lipids. This Xenopus laevis (African clawed frog) protein is Charged multivesicular body protein 1a (chmp1a).